Consider the following 446-residue polypeptide: Glycerol-3-phosphate acyltransferase 3 (446 aa).

3 helical membrane passes run 25–45 (LPSA…VLVK), 142–162 (LRLT…LLPL), and 164–184 (FTLA…VGQL). The short motif at 232-237 (HTSPID) is the HXXXXD motif element. The chain crosses the membrane as a helical span at residues 352–372 (IVSYLLRIMTSWAIVCHVWYM). Residues 418 to 446 (FKEEQQKNYSKMLVRNGSQGNLPAGTESD) form a disordered region.

Belongs to the 1-acyl-sn-glycerol-3-phosphate acyltransferase family.

It is found in the endoplasmic reticulum membrane. The enzyme catalyses sn-glycerol 3-phosphate + an acyl-CoA = a 1-acyl-sn-glycero-3-phosphate + CoA. The catalysed reaction is a 1-acyl-sn-glycero-3-phosphate + an acyl-CoA = a 1,2-diacyl-sn-glycero-3-phosphate + CoA. It carries out the reaction dodecanoyl-CoA + sn-glycerol 3-phosphate = 1-dodecanoyl-sn-glycerol 3-phosphate + CoA. It catalyses the reaction sn-glycerol 3-phosphate + hexadecanoyl-CoA = 1-hexadecanoyl-sn-glycero-3-phosphate + CoA. The enzyme catalyses sn-glycerol 3-phosphate + (9Z)-octadecenoyl-CoA = 1-(9Z-octadecenoyl)-sn-glycero-3-phosphate + CoA. The catalysed reaction is (9Z,12Z)-octadecadienoyl-CoA + sn-glycerol 3-phosphate = 1-(9Z,12Z)-octadecadienoyl-sn-glycero-3-phosphate + CoA. It carries out the reaction 1-tetradecanoyl-sn-glycerol 3-phosphate + (9Z)-octadecenoyl-CoA = 1-tetradecanoyl-2-(9Z)-octadecenoyl-sn-glycero-3-phosphate + CoA. It catalyses the reaction 1-hexadecanoyl-sn-glycero-3-phosphate + (9Z)-octadecenoyl-CoA = 1-hexadecanoyl-2-(9Z-octadecenoyl)-sn-glycero-3-phosphate + CoA. The enzyme catalyses 1-(9Z-octadecenoyl)-sn-glycero-3-phosphate + (9Z)-octadecenoyl-CoA = 1,2-di-(9Z-octadecenoyl)-sn-glycero-3-phosphate + CoA. The catalysed reaction is 1-(6Z,9Z,12Z-octadecatrienoyl)-sn-glycero-3-phosphate + (9Z)-octadecenoyl-CoA = (6Z,9Z,12Z)-octadecatrienoyl-2-(9Z)-octadecenoyl-sn-glycero-3-phosphate + CoA. It carries out the reaction 1-(9Z,12Z,15Z)-octadecatrienoyl-sn-glycero-3-phosphate + (9Z)-octadecenoyl-CoA = 1-(9Z,12Z,15Z)-octadecatrienoyl-2-(9Z)-octadecenoyl-sn-glycero-3-phosphate + CoA. It catalyses the reaction 1-(9Z-octadecenoyl)-sn-glycero-3-phosphate + tetradecanoyl-CoA = 1-(9Z)-octadecenoyl-2-tetradecanoyl-sn-glycero-3-phosphate + CoA. The enzyme catalyses 1-(9Z-octadecenoyl)-sn-glycero-3-phosphate + hexadecanoyl-CoA = 1-(9Z)-octadecenoyl-2-hexadecanoyl-sn-glycero-3-phosphate + CoA. The catalysed reaction is 1-(9Z-octadecenoyl)-sn-glycero-3-phosphate + octadecanoyl-CoA = 1-(9Z-octadecenoyl)-2-octadecanoyl-sn-glycero-3-phosphate + CoA. It carries out the reaction 1-(9Z-octadecenoyl)-sn-glycero-3-phosphate + (9Z,12Z)-octadecadienoyl-CoA = 1-(9Z)-octadecenoyl-2-(9Z,12Z)-octadecadienoyl-sn-glycero-3-phosphate + CoA. It catalyses the reaction 1-(5Z,8Z,11Z,14Z-eicosatetraenoyl)-sn-glycero-3-phosphate + (9Z)-octadecenoyl-CoA = 1-(5Z,8Z,11Z,14Z)-eicosatetraenoyl-2-(9Z)-octadecenoyl-sn-glycero-3-phosphate + CoA. Its pathway is glycerolipid metabolism; triacylglycerol biosynthesis. It participates in phospholipid metabolism; CDP-diacylglycerol biosynthesis; CDP-diacylglycerol from sn-glycerol 3-phosphate: step 1/3. In terms of biological role, converts glycerol-3-phosphate to 1-acyl-sn-glycerol-3-phosphate (lysophosphatidic acid or LPA) by incorporating an acyl moiety at the sn-1 position of the glycerol backbone. Also converts LPA into 1,2-diacyl-sn-glycerol-3-phosphate (phosphatidic acid or PA) by incorporating an acyl moiety at the sn-2 position of the glycerol backbone. Protects cells against lipotoxicity. The chain is Glycerol-3-phosphate acyltransferase 3 from Gallus gallus (Chicken).